Reading from the N-terminus, the 451-residue chain is UDP-N-acetyl-alpha-D-muramoyl-L-alanyl-L-glutamate epimerase (451 aa).

This sequence belongs to the MurL family.

It catalyses the reaction UDP-N-acetyl-alpha-D-muramoyl-L-alanyl-L-glutamate + ATP + H2O = UDP-N-acetyl-alpha-D-muramoyl-L-alanyl-D-glutamate + AMP + diphosphate + H(+). Its pathway is cell wall biogenesis; peptidoglycan biosynthesis. Its function is as follows. Cell wall formation. Catalyzes epimerization of the terminal L-glutamate in UDP-N-acetyl-alpha-D-muramoyl-L-alanyl-L-glutamate. The protein is UDP-N-acetyl-alpha-D-muramoyl-L-alanyl-L-glutamate epimerase of Xanthomonas oryzae pv. oryzae (strain MAFF 311018).